The following is a 282-amino-acid chain: Protoheme IX farnesyltransferase (282 aa).

Helical transmembrane passes span 9-29 (LAKP…FLLA), 39-59 (LPLF…GCVF), 79-99 (LVTG…LLIL), 102-122 (LVLY…GFIV), 139-159 (VLGG…VVNI), 165-185 (LALF…IAML), 210-230 (IMLF…VLGS), 231-251 (ADLF…YKSI), and 261-281 (VFAK…CLTM).

This sequence belongs to the UbiA prenyltransferase family. Protoheme IX farnesyltransferase subfamily.

Its subcellular location is the cell inner membrane. The catalysed reaction is heme b + (2E,6E)-farnesyl diphosphate + H2O = Fe(II)-heme o + diphosphate. Its pathway is porphyrin-containing compound metabolism; heme O biosynthesis; heme O from protoheme: step 1/1. Functionally, converts heme B (protoheme IX) to heme O by substitution of the vinyl group on carbon 2 of heme B porphyrin ring with a hydroxyethyl farnesyl side group. This Francisella tularensis subsp. holarctica (strain FTNF002-00 / FTA) protein is Protoheme IX farnesyltransferase.